A 317-amino-acid polypeptide reads, in one-letter code: Tumor necrosis factor ligand superfamily member 11 (317 aa).

Residues 1-16 (MRRASRDYTKYLRGSE) show a composition bias toward basic and acidic residues. The interval 1 to 43 (MRRASRDYTKYLRGSEEMGGGPGAPHEGPLHAPPPPAPHQPPA) is disordered. The Cytoplasmic segment spans residues 1–47 (MRRASRDYTKYLRGSEEMGGGPGAPHEGPLHAPPPPAPHQPPAASRS). Over residues 31–41 (HAPPPPAPHQP) the composition is skewed to pro residues. A helical; Signal-anchor for type II membrane protein transmembrane segment spans residues 48–68 (MFVALLGLGLGQVVCSVALFF). At 69–317 (YFRAQMDPNR…FGAFKVRDID (249 aa)) the chain is on the extracellular side. The 150-residue stretch at 164–313 (PFAHLTINAT…DATYFGAFKV (150 aa)) folds into the THD domain. N-linked (GlcNAc...) asparagine glycosylation is found at asparagine 171 and asparagine 198.

The protein belongs to the tumor necrosis factor family. As to quaternary structure, homotrimer. Interacts with TNFRSF11B. Interacts with TNFRSF11A. Interacts with FBN1 (via N-terminal domain) in a Ca(+2)-dependent manner. Interacts with TNFAIP6 (via both Link and CUB domains). In terms of processing, the soluble form of isoform 1 derives from the membrane form by proteolytic processing. The cleavage may be catalyzed by ADAM17. Highest in the peripheral lymph nodes, weak in spleen, peripheral blood Leukocytes, bone marrow, heart, placenta, skeletal muscle, stomach and thyroid.

It localises to the cell membrane. The protein resides in the cytoplasm. It is found in the secreted. Functionally, cytokine that binds to TNFRSF11B/OPG and to TNFRSF11A/RANK. Osteoclast differentiation and activation factor. Augments the ability of dendritic cells to stimulate naive T-cell proliferation. May be an important regulator of interactions between T-cells and dendritic cells and may play a role in the regulation of the T-cell-dependent immune response. May also play an important role in enhanced bone-resorption in humoral hypercalcemia of malignancy. Induces osteoclastogenesis by activating multiple signaling pathways in osteoclast precursor cells, chief among which is induction of long lasting oscillations in the intracellular concentration of Ca (2+) resulting in the activation of NFATC1, which translocates to the nucleus and induces osteoclast-specific gene transcription to allow differentiation of osteoclasts. During osteoclast differentiation, in a TMEM64 and ATP2A2-dependent manner induces activation of CREB1 and mitochondrial ROS generation necessary for proper osteoclast generation. The chain is Tumor necrosis factor ligand superfamily member 11 (TNFSF11) from Homo sapiens (Human).